The following is a 94-amino-acid chain: MMDGHVQGLRKPLIPMSHVVGCNLLLYIRLGCREIYVGCVHYQGGFTNVIFYFKCSNEGCIISLAVFPAILPAAYNSHGERIVACCGCNMTVAY.

This is an uncharacterized protein from Saccharomyces cerevisiae (strain ATCC 204508 / S288c) (Baker's yeast).